The chain runs to 450 residues: UDP-N-acetylmuramoylalanine--D-glutamate ligase (450 aa).

119-125 (GSNGKTT) lines the ATP pocket.

The protein belongs to the MurCDEF family.

The protein resides in the cytoplasm. It catalyses the reaction UDP-N-acetyl-alpha-D-muramoyl-L-alanine + D-glutamate + ATP = UDP-N-acetyl-alpha-D-muramoyl-L-alanyl-D-glutamate + ADP + phosphate + H(+). It functions in the pathway cell wall biogenesis; peptidoglycan biosynthesis. Its function is as follows. Cell wall formation. Catalyzes the addition of glutamate to the nucleotide precursor UDP-N-acetylmuramoyl-L-alanine (UMA). The polypeptide is UDP-N-acetylmuramoylalanine--D-glutamate ligase (Streptococcus thermophilus (strain ATCC BAA-491 / LMD-9)).